A 257-amino-acid chain; its full sequence is Asnovolin H dehydrogenase nvfC (257 aa).

A helical transmembrane segment spans residues 7–26; the sequence is YVLIITGSASGIGLATATIA. NADP(+) is bound at residue I11. Residues N57, N92, and N110 are each glycosylated (N-linked (GlcNAc...) asparagine). Residues R119, Y151, K155, and V184 each coordinate NADP(+). The active-site Proton donor is Y151. Catalysis depends on K155, which acts as the Lowers pKa of active site Tyr.

Belongs to the short-chain dehydrogenases/reductases (SDR) family.

The protein resides in the membrane. It catalyses the reaction asnovolin H + A = chermesin D + AH2. It participates in secondary metabolite biosynthesis; terpenoid biosynthesis. In terms of biological role, short chain dehydrogenase; part of the gene cluster that mediates the biosynthesis of novofumigatonin, a heavily oxygenated meroterpenoid containing a unique orthoester moiety. The first step of the pathway is the synthesis of 3,5-dimethylorsellinic acid (DMOA) by the polyketide synthase nvfA via condensation of one acetyl-CoA starter unit with 3 malonyl-CoA units and 2 methylations. DMOA is then converted to farnesyl-DMOA by the farnesyltransferase nvfB. Epoxydation by FAD-dependent monooxygenase nvfK, followed by a protonation-initiated cyclization catalyzed by the terpene cyclase nvfL leads to the production of asnavolin H. The short chain dehydrogenase nvfC then as a 3-OH dehydrogenase of asnovolin H to yield chemesin D. There are two branches to synthesize asnovolin A from chemesin D. In one branch, chemesin D undergoes Baeyer-Villiger oxidation by nvfH, methylation by nvfJ, and enoyl reduction by the nvfM D enoylreductase that reduces the double bond between C-5'and C-6', to form respectively asnovolin I, asnovolin K, and asnovolin A. In the other branch, the methylation precedes the Baeyer-Villiger oxidation and the enoyl reduction to yield asnovolin A via the asnovolin J intermediate. Asnovolin A is further converted to fumigatonoid A by the Fe(II)/2-oxoglutarate-dependent dioxygenase nvfI that catalyzes an endoperoxidation reaction. The alpha/beta hydrolase nvfD then acts as an epimerase that converts fumigatonoid A to its C-5' epimer, which then undergoes spontaneous or nvfD-catalyzed lactonization. The following step utilizes the ketoreductase nvfG to produce fumigatonoid B. The dioxygenase nvfE further converts fumigatonoid B into fumigatonoid C. Finally the Fe(II)/2-oxoglutarate-dependent dioxygenase nvfF catalyzes two rounds of oxidation to transform fumigatonoid C into the end product, novofumigatonin A. This chain is Asnovolin H dehydrogenase nvfC, found in Aspergillus novofumigatus (strain IBT 16806).